The primary structure comprises 210 residues: Imidazole glycerol phosphate synthase subunit HisH (210 aa).

The Glutamine amidotransferase type-1 domain occupies K3 to L210. C81 (nucleophile) is an active-site residue. Residues H191 and E193 contribute to the active site.

As to quaternary structure, heterodimer of HisH and HisF.

It localises to the cytoplasm. The enzyme catalyses 5-[(5-phospho-1-deoxy-D-ribulos-1-ylimino)methylamino]-1-(5-phospho-beta-D-ribosyl)imidazole-4-carboxamide + L-glutamine = D-erythro-1-(imidazol-4-yl)glycerol 3-phosphate + 5-amino-1-(5-phospho-beta-D-ribosyl)imidazole-4-carboxamide + L-glutamate + H(+). It catalyses the reaction L-glutamine + H2O = L-glutamate + NH4(+). Its pathway is amino-acid biosynthesis; L-histidine biosynthesis; L-histidine from 5-phospho-alpha-D-ribose 1-diphosphate: step 5/9. In terms of biological role, IGPS catalyzes the conversion of PRFAR and glutamine to IGP, AICAR and glutamate. The HisH subunit catalyzes the hydrolysis of glutamine to glutamate and ammonia as part of the synthesis of IGP and AICAR. The resulting ammonia molecule is channeled to the active site of HisF. The polypeptide is Imidazole glycerol phosphate synthase subunit HisH (Corynebacterium diphtheriae (strain ATCC 700971 / NCTC 13129 / Biotype gravis)).